Consider the following 1399-residue polypeptide: DNA-directed RNA polymerase subunit beta' (1399 aa).

4 residues coordinate Zn(2+): Cys70, Cys72, Cys85, and Cys88. Residues Asp460, Asp462, and Asp464 each coordinate Mg(2+). Residues Cys814, Cys888, Cys895, and Cys898 each coordinate Zn(2+).

It belongs to the RNA polymerase beta' chain family. As to quaternary structure, the RNAP catalytic core consists of 2 alpha, 1 beta, 1 beta' and 1 omega subunit. When a sigma factor is associated with the core the holoenzyme is formed, which can initiate transcription. Mg(2+) is required as a cofactor. It depends on Zn(2+) as a cofactor.

The enzyme catalyses RNA(n) + a ribonucleoside 5'-triphosphate = RNA(n+1) + diphosphate. Functionally, DNA-dependent RNA polymerase catalyzes the transcription of DNA into RNA using the four ribonucleoside triphosphates as substrates. This Pseudomonas putida (strain GB-1) protein is DNA-directed RNA polymerase subunit beta'.